A 194-amino-acid chain; its full sequence is RNA polymerase II subunit A C-terminal domain phosphatase SSU72 like protein 4 (194 aa).

This sequence belongs to the SSU72 phosphatase family.

The protein localises to the nucleus. It catalyses the reaction O-phospho-L-seryl-[protein] + H2O = L-seryl-[protein] + phosphate. It carries out the reaction O-phospho-L-threonyl-[protein] + H2O = L-threonyl-[protein] + phosphate. Functionally, protein phosphatase that catalyzes the dephosphorylation of the C-terminal domain of RNA polymerase II. Plays a role in RNA processing and termination. In Homo sapiens (Human), this protein is RNA polymerase II subunit A C-terminal domain phosphatase SSU72 like protein 4.